Reading from the N-terminus, the 682-residue chain is MLLNGQISALSLDDNDNGQQHQDEVQAKHQDQGHTCPSRPSVPSLSRIYRCTPVPTIVLDASMVIIEVSNSHVALFGKPRDSLLHTSISDVSPECIPVPNIPILYGALRAACSTREIQVVEHVVVGEKIAHNLRVTPVYEDETLLFVVLEVENLRAEVINNQHAYMNETYKILVDTVKDYAIFMLDPTGHIATWNAGAGVLKGYKAEEIIGKHFSILYSPADRDNGKPARALDVCLREGRIEDEGWRYRRDGSRFWANVLITPIYQFGQHVGFVKVTRDLTERKEAEACMIAAFEESSRLKTDFLANISHEIRTPMNGMQIALTMLTDTGLSEEQREHANIVQDSMSLLLQIVNDVLDYSKLSSGSFSLHADMLDIREIVGAVVRNCRSSLQEGVELDTEISPKLPTRMRGDPLRYRQVLQNLVGNAVKFTEKGSIHVKITSSTDEEDSDSSVVRTEVTDTGIGVPDSAINTLFTPFSRFANSAARKYQGTGLGLSICKSLAELMDGSVGYSPNPNASGSVFWFTAKMGGRSVTPPSKSPSVSGSPVPTEVASEMRSIAPRKHVLLVEDNIVNHTVMLKLLHTIGFQRIDGAWNGAEAVRMVRQKPLSYDIILMDVSMPVLDGLAATEQIRDMGLTMPIIAITGNAMKGDAETYIAQGMDDCICKPVHRDQLLRVLWKWFGT.

The tract at residues 11–41 is disordered; sequence SLDDNDNGQQHQDEVQAKHQDQGHTCPSRPS. Positions 21–32 are enriched in basic and acidic residues; that stretch reads HQDEVQAKHQDQ. PAS domains are found at residues 45 to 105 and 166 to 239; these read LSRI…PILY and MNET…LREG. The 52-residue stretch at 241–292 folds into the PAC domain; that stretch reads IEDEGWRYRRDGSRFWANVLITPIYQFGQHVGFVKVTRDLTERKEAEACMIA. A Histidine kinase domain is found at 307–530; that stretch reads NISHEIRTPM…VFWFTAKMGG (224 aa). At His-310 the chain carries Phosphohistidine; by autocatalysis. One can recognise a Response regulatory domain in the interval 563–680; it reads HVLLVEDNIV…QLLRVLWKWF (118 aa). Asp-615 carries the post-translational modification 4-aspartylphosphate.

In terms of processing, activation probably requires a transfer of a phosphate group between a His in the histidine kinase domain and an Asp of the response regulatory domain.

It localises to the cytoplasm. The catalysed reaction is ATP + protein L-histidine = ADP + protein N-phospho-L-histidine.. Functionally, may be part of a two-component regulatory system required for formation of conidia on certain growth media. In Emericella nidulans (strain FGSC A4 / ATCC 38163 / CBS 112.46 / NRRL 194 / M139) (Aspergillus nidulans), this protein is Two-component system protein A.